Reading from the N-terminus, the 602-residue chain is RecBCD enzyme subunit RecD (602 aa).

Position 174-181 (174-181 (GGPGTGKT)) interacts with ATP.

The protein belongs to the RecD family. In terms of assembly, heterotrimer of RecB, RecC and RecD. All subunits contribute to DNA-binding.

It catalyses the reaction Couples ATP hydrolysis with the unwinding of duplex DNA at the replication fork by translocating in the 5'-3' direction. This creates two antiparallel DNA single strands (ssDNA). The leading ssDNA polymer is the template for DNA polymerase III holoenzyme which synthesizes a continuous strand.. The enzyme catalyses ATP + H2O = ADP + phosphate + H(+). Its function is as follows. A helicase/nuclease that prepares dsDNA breaks (DSB) for recombinational DNA repair. Binds to DSBs and unwinds DNA via a highly rapid and processive ATP-dependent bidirectional helicase activity. Unwinds dsDNA until it encounters a Chi (crossover hotspot instigator) sequence from the 3' direction. Cuts ssDNA a few nucleotides 3' to the Chi site. The properties and activities of the enzyme are changed at Chi. The Chi-altered holoenzyme produces a long 3'-ssDNA overhang and facilitates RecA-binding to the ssDNA for homologous DNA recombination and repair. Holoenzyme degrades any linearized DNA that is unable to undergo homologous recombination. In the holoenzyme this subunit has ssDNA-dependent ATPase and 5'-3' helicase activity. When added to pre-assembled RecBC greatly stimulates nuclease activity and augments holoenzyme processivity. Negatively regulates the RecA-loading ability of RecBCD. In Buchnera aphidicola subsp. Schizaphis graminum (strain Sg), this protein is RecBCD enzyme subunit RecD.